A 502-amino-acid polypeptide reads, in one-letter code: MGDFCRRVDCKAMKFFALRSSIRTQIMASTTLLILALIGAIVTVWAKSESTLYHQEKLNDAKILSKVLSSTYANEVSEENWSQIRLNIDLLLRENEDFLYALVSDSNQKNQIAASSPDEFQNNYIPDIVSLSVTNAAINSSEKTHVVETFILRDIYFADKLRAKRGEKVMEVSSDIQTLSGRKLGKLRIGISLRKVNLAVTNAVNQALVVGFAGLNIGWICAYFLAQHLSDPVRRLQISVAKIAGGDLQHRADIHSRADEIGALATSVNEMSAALQISFNKLKKTLDSFERFVPNKFISVIAPQGIENIEVGAASTRRMTILFCDIRGYTSMSEAMEPIEIFRFLNDYLACMGKAIDEAGGFIDKYIGDAIMALFDDGNTDCALHAAILMQQALDKFNDERSMQTGKTGLPRISVGIGIHRGTVVMGTVGFTSRIDSTVIGDAVNVASRIEGLTKQYGCNILITESVVRNLSCPESFSLRLIDKSVKVKGKDEAISIYEVKA.

The Cytoplasmic segment spans residues 1 to 25 (MGDFCRRVDCKAMKFFALRSSIRTQ). Residues 26 to 46 (IMASTTLLILALIGAIVTVWA) traverse the membrane as a helical segment. Topologically, residues 47–203 (KSESTLYHQE…RKVNLAVTNA (157 aa)) are lumenal, thylakoid. The helical transmembrane segment at 204 to 226 (VNQALVVGFAGLNIGWICAYFLA) threads the bilayer. The region spanning 227–280 (QHLSDPVRRLQISVAKIAGGDLQHRADIHSRADEIGALATSVNEMSAALQISFN) is the HAMP domain. Over 227 to 502 (QHLSDPVRRL…EAISIYEVKA (276 aa)) the chain is Cytoplasmic. The 132-residue stretch at 320–451 (TILFCDIRGY…DAVNVASRIE (132 aa)) folds into the Guanylate cyclase domain. Mg(2+)-binding residues include aspartate 325 and aspartate 369.

This sequence belongs to the adenylyl cyclase class-3 family. It depends on Mg(2+) as a cofactor.

The protein resides in the cellular thylakoid membrane. It catalyses the reaction ATP = 3',5'-cyclic AMP + diphosphate. In terms of biological role, may function as a membrane-localized receptor protein. This is Adenylate cyclase (cya) from Anabaena cylindrica.